Reading from the N-terminus, the 81-residue chain is uncharacterized protein (81 aa).

It to M.thermoautotrophicum MTH886.

This is an uncharacterized protein from Methanocaldococcus jannaschii (strain ATCC 43067 / DSM 2661 / JAL-1 / JCM 10045 / NBRC 100440) (Methanococcus jannaschii).